The primary structure comprises 315 residues: DNA-directed RNA polymerase subunit alpha (315 aa).

The tract at residues Met1 to Thr228 is alpha N-terminal domain (alpha-NTD). The segment at Lys245–Glu315 is alpha C-terminal domain (alpha-CTD).

Belongs to the RNA polymerase alpha chain family. As to quaternary structure, homodimer. The RNAP catalytic core consists of 2 alpha, 1 beta, 1 beta' and 1 omega subunit. When a sigma factor is associated with the core the holoenzyme is formed, which can initiate transcription.

It catalyses the reaction RNA(n) + a ribonucleoside 5'-triphosphate = RNA(n+1) + diphosphate. In terms of biological role, DNA-dependent RNA polymerase catalyzes the transcription of DNA into RNA using the four ribonucleoside triphosphates as substrates. The sequence is that of DNA-directed RNA polymerase subunit alpha from Clostridium botulinum (strain Alaska E43 / Type E3).